A 356-amino-acid polypeptide reads, in one-letter code: Dynein axonemal heavy chain 12 (356 aa).

ANK repeat units follow at residues 17 to 46 (DSSS…DANV), 50 to 81 (SGHL…AIKR), 82 to 111 (SGIS…DVNF), 124 to 153 (HRKS…MPNQ), 154 to 183 (DPVN…NVNY), and 185 to 218 (CRVN…DTEL). The region spanning 290–345 (WSEIHFILTNPRSLKHLCRLKIRKCMGRLRLRCPVFMSFLPLPSRLKAYVLYKEYD) is the SOCS box domain.

The protein belongs to the dynein heavy chain family. Consists of at least two heavy chains and a number of intermediate and light chains.

It is found in the cytoplasm. It localises to the cytoskeleton. The protein localises to the cilium axoneme. It functions in the pathway protein modification; protein ubiquitination. Functionally, force generating protein of respiratory cilia. Produces force towards the minus ends of microtubules. Dynein has ATPase activity; the force-producing power stroke is thought to occur on release of ADP. Involved in sperm motility; implicated in sperm flagellar assembly. Its function is as follows. May be a substrate-recognition component of a SCF-like ECS (Elongin-Cullin-SOCS-box protein) E3 ubiquitin-protein ligase complex which mediates the ubiquitination and subsequent proteasomal degradation of target proteins. This chain is Dynein axonemal heavy chain 12 (DNAH12), found in Bos taurus (Bovine).